The primary structure comprises 118 residues: Small ribosomal subunit protein uS13 (118 aa).

The tract at residues 94-118 is disordered; that stretch reads GLPVRGQRTKTNARTRKGPRKPIRK.

This sequence belongs to the universal ribosomal protein uS13 family. As to quaternary structure, part of the 30S ribosomal subunit. Forms a loose heterodimer with protein S19. Forms two bridges to the 50S subunit in the 70S ribosome.

In terms of biological role, located at the top of the head of the 30S subunit, it contacts several helices of the 16S rRNA. In the 70S ribosome it contacts the 23S rRNA (bridge B1a) and protein L5 of the 50S subunit (bridge B1b), connecting the 2 subunits; these bridges are implicated in subunit movement. Contacts the tRNAs in the A and P-sites. The chain is Small ribosomal subunit protein uS13 from Pseudomonas aeruginosa (strain LESB58).